A 398-amino-acid chain; its full sequence is Carbamoyl phosphate synthase small chain (398 aa).

The CPSase stretch occupies residues methionine 1–asparagine 207. The L-glutamine site is built by serine 60, glycine 257, and glycine 259. Residues histidine 209–isoleucine 397 form the Glutamine amidotransferase type-1 domain. Cysteine 286 acts as the Nucleophile in catalysis. Residues leucine 287, glutamine 290, asparagine 328, glycine 330, and phenylalanine 331 each coordinate L-glutamine. Catalysis depends on residues histidine 370 and glutamate 372.

Belongs to the CarA family. In terms of assembly, composed of two chains; the small (or glutamine) chain promotes the hydrolysis of glutamine to ammonia, which is used by the large (or ammonia) chain to synthesize carbamoyl phosphate. Tetramer of heterodimers (alpha,beta)4.

The enzyme catalyses hydrogencarbonate + L-glutamine + 2 ATP + H2O = carbamoyl phosphate + L-glutamate + 2 ADP + phosphate + 2 H(+). It carries out the reaction L-glutamine + H2O = L-glutamate + NH4(+). The protein operates within amino-acid biosynthesis; L-arginine biosynthesis; carbamoyl phosphate from bicarbonate: step 1/1. It functions in the pathway pyrimidine metabolism; UMP biosynthesis via de novo pathway; (S)-dihydroorotate from bicarbonate: step 1/3. Its function is as follows. Small subunit of the glutamine-dependent carbamoyl phosphate synthetase (CPSase). CPSase catalyzes the formation of carbamoyl phosphate from the ammonia moiety of glutamine, carbonate, and phosphate donated by ATP, constituting the first step of 2 biosynthetic pathways, one leading to arginine and/or urea and the other to pyrimidine nucleotides. The small subunit (glutamine amidotransferase) binds and cleaves glutamine to supply the large subunit with the substrate ammonia. The chain is Carbamoyl phosphate synthase small chain from Bartonella tribocorum (strain CIP 105476 / IBS 506).